The sequence spans 270 residues: Diaminopimelate epimerase (270 aa).

Asn-15, Gln-49, and Asn-66 together coordinate substrate. Catalysis depends on Cys-75, which acts as the Proton donor. Substrate-binding positions include 76-77 (GN), Asn-155, Asn-187, and 204-205 (ER). Cys-213 serves as the catalytic Proton acceptor. 214–215 (GS) lines the substrate pocket.

This sequence belongs to the diaminopimelate epimerase family. Homodimer.

Its subcellular location is the cytoplasm. It catalyses the reaction (2S,6S)-2,6-diaminopimelate = meso-2,6-diaminopimelate. The protein operates within amino-acid biosynthesis; L-lysine biosynthesis via DAP pathway; DL-2,6-diaminopimelate from LL-2,6-diaminopimelate: step 1/1. In terms of biological role, catalyzes the stereoinversion of LL-2,6-diaminopimelate (L,L-DAP) to meso-diaminopimelate (meso-DAP), a precursor of L-lysine and an essential component of the bacterial peptidoglycan. In Rickettsia africae (strain ESF-5), this protein is Diaminopimelate epimerase.